The following is a 307-amino-acid chain: Isethionate sulfite-lyase activating enzyme (307 aa).

The 286-residue stretch at 22-307 folds into the Radical SAM core domain; that stretch reads HDGPGIRTVV…EAVVAQTADS (286 aa). Cysteine 36, cysteine 40, cysteine 43, cysteine 62, cysteine 68, cysteine 71, cysteine 75, cysteine 95, cysteine 98, cysteine 102, and cysteine 106 together coordinate [4Fe-4S] cluster. S-adenosyl-L-methionine is bound at residue 42–44; the sequence is WCS. 4Fe-4S ferredoxin-type domains follow at residues 53–85 and 86–117; these read VELA…RAED and DTIS…YGAH. S-adenosyl-L-methionine is bound by residues glycine 146, 195–197, and histidine 268; that span reads DIK.

It belongs to the organic radical-activating enzymes family. As to quaternary structure, monomer. [4Fe-4S] cluster is required as a cofactor.

It carries out the reaction glycyl-[protein] + reduced [flavodoxin] + S-adenosyl-L-methionine = glycin-2-yl radical-[protein] + semiquinone [flavodoxin] + 5'-deoxyadenosine + L-methionine + H(+). It participates in organosulfur degradation; alkanesulfonate degradation. Functionally, involved in an anaerobic respiration pathway that converts the sulfonate isethionate (2-hydroxyethanesulfonate) to ammonia, acetate and sulfide. Catalyzes activation of the isethionate sulfite-lyase IseG under anaerobic conditions by generation of an organic free radical on a glycine residue, via a homolytic cleavage of S-adenosyl-L-methionine (SAM). The chain is Isethionate sulfite-lyase activating enzyme from Nitratidesulfovibrio vulgaris (strain ATCC 29579 / DSM 644 / CCUG 34227 / NCIMB 8303 / VKM B-1760 / Hildenborough) (Desulfovibrio vulgaris).